We begin with the raw amino-acid sequence, 823 residues long: Apoptosis-resistant E3 ubiquitin protein ligase 1 (823 aa).

The Filamin repeat unit spans residues 52 to 158 (GNYLDPRSCK…VAYSPYYKIF (107 aa)). A disordered region spans residues 315 to 345 (PPMHMTSSQRRPSTAVDEEDEDSPSECHTPE). The tract at residues 483–789 (SISDWSKNFE…THSTLPTAHT (307 aa)) is interaction with SOCS2. The region spanning 483–823 (SISDWSKNFE…SEGCEGFGML (341 aa)) is the HECT domain. C790 (glycyl thioester intermediate) is an active-site residue.

As to quaternary structure, interacts with SOCS2. Interacts (via HECT domain) with HTRA2, DIABLO/SMAC and SEPTIN4; in the cytoplasm following induction of apoptosis. Autoubiquitinated in vitro in the presence of E2 enzyme UBE2D1/UBCH5A.

The enzyme catalyses S-ubiquitinyl-[E2 ubiquitin-conjugating enzyme]-L-cysteine + [acceptor protein]-L-lysine = [E2 ubiquitin-conjugating enzyme]-L-cysteine + N(6)-ubiquitinyl-[acceptor protein]-L-lysine.. Its pathway is protein modification; protein ubiquitination. In terms of biological role, E3 ubiquitin-protein ligase that catalyzes 'Lys-11'- or 'Lys-33'-linked polyubiquitin chains, with some preference for 'Lys-33' linkages. E3 ubiquitin-protein ligases accept ubiquitin from an E2 ubiquitin-conjugating enzyme in the form of a thioester and then directly transfers the ubiquitin to targeted substrates. Ubiquitinates SEPTIN4, DIABLO/SMAC and HTRA2 in vitro. Modulates pulmonary inflammation by targeting SOCS2 for ubiquitination and subsequent degradation by the proteasome. The polypeptide is Apoptosis-resistant E3 ubiquitin protein ligase 1 (Homo sapiens (Human)).